A 164-amino-acid polypeptide reads, in one-letter code: Putative 4-hydroxy-4-methyl-2-oxoglutarate aldolase (164 aa).

Residues 75 to 78 (GDLI) and Arg-97 each bind substrate. Asp-98 is an a divalent metal cation binding site.

The protein belongs to the class II aldolase/RraA-like family. Homotrimer. A divalent metal cation is required as a cofactor.

The catalysed reaction is 4-hydroxy-4-methyl-2-oxoglutarate = 2 pyruvate. It catalyses the reaction oxaloacetate + H(+) = pyruvate + CO2. Its function is as follows. Catalyzes the aldol cleavage of 4-hydroxy-4-methyl-2-oxoglutarate (HMG) into 2 molecules of pyruvate. Also contains a secondary oxaloacetate (OAA) decarboxylase activity due to the common pyruvate enolate transition state formed following C-C bond cleavage in the retro-aldol and decarboxylation reactions. In Shewanella oneidensis (strain ATCC 700550 / JCM 31522 / CIP 106686 / LMG 19005 / NCIMB 14063 / MR-1), this protein is Putative 4-hydroxy-4-methyl-2-oxoglutarate aldolase.